A 546-amino-acid polypeptide reads, in one-letter code: (-)-5-epieremophilene synthase STPS1 (546 aa).

Residues D299, D303, D442, T446, and E450 each coordinate Mg(2+). A DDXXD motif motif is present at residues 299–303 (DDTYD).

It belongs to the terpene synthase family. Tpsa subfamily. Monomer. It depends on Mg(2+) as a cofactor. As to expression, highly expressed in leaves and at lower levels in flowers.

It catalyses the reaction (2E,6E)-farnesyl diphosphate = (-)-5-epi-eremophilene + diphosphate. It participates in secondary metabolite biosynthesis; terpenoid biosynthesis. In terms of biological role, sesquiterpene synthase that catalyzes the conversion of farnesyl diphosphate to (-)-5-epi-eremophilene. This chain is (-)-5-epieremophilene synthase STPS1, found in Salvia miltiorrhiza (Chinese sage).